The following is a 293-amino-acid chain: MNKDLKGLYAALLVPFDENGQVNEQGLKQIAQNTIETEELDGLYVNGSSGENFLLNTEQKKQVFKVAKEAVGDKVKLIAQVGSLDLNEAIELGKYATEIGYDALSAVTPFYYPFTFEEIRDYYFDIIEATQNNMIIYAIPDLTGVNISIEQFSELFNHEKIVGVKYTAPNFFLLERIRKAFPDKLILSGFDEMLVQATISGVDGAIGSTYNVNGRRARKIFDLARQGQIQEAYQLQHDSNDIIETVLSMGIYPTLKEILRHRGIDAGLPKRPFKPFNEAHRQTLDQLIAKYDL.

Residues Ser48 and Ser49 each coordinate aceneuramate. Residue Tyr137 is the Proton donor of the active site. Residue Lys165 is the Schiff-base intermediate with substrate of the active site. Residues Thr167, Gly189, Asp191, Glu192, and Ser208 each coordinate aceneuramate.

The protein belongs to the DapA family. NanA subfamily. As to quaternary structure, homotetramer.

It is found in the cytoplasm. The catalysed reaction is aceneuramate = aldehydo-N-acetyl-D-mannosamine + pyruvate. The protein operates within amino-sugar metabolism; N-acetylneuraminate degradation; D-fructose 6-phosphate from N-acetylneuraminate: step 1/5. In terms of biological role, catalyzes the reversible aldol cleavage of N-acetylneuraminic acid (sialic acid; Neu5Ac) to form pyruvate and N-acetylmannosamine (ManNAc) via a Schiff base intermediate. The protein is N-acetylneuraminate lyase of Staphylococcus aureus (strain bovine RF122 / ET3-1).